The following is a 225-amino-acid chain: 7-cyano-7-deazaguanine synthase (225 aa).

9 to 19 provides a ligand contact to ATP; the sequence is YSGGLDSTTCL. Zn(2+) contacts are provided by Cys-188, Cys-198, Cys-201, and Cys-204.

It belongs to the QueC family. The cofactor is Zn(2+).

It catalyses the reaction 7-carboxy-7-deazaguanine + NH4(+) + ATP = 7-cyano-7-deazaguanine + ADP + phosphate + H2O + H(+). Its pathway is purine metabolism; 7-cyano-7-deazaguanine biosynthesis. Its function is as follows. Catalyzes the ATP-dependent conversion of 7-carboxy-7-deazaguanine (CDG) to 7-cyano-7-deazaguanine (preQ(0)). The protein is 7-cyano-7-deazaguanine synthase of Citrifermentans bemidjiense (strain ATCC BAA-1014 / DSM 16622 / JCM 12645 / Bem) (Geobacter bemidjiensis).